The chain runs to 65 residues: Large ribosomal subunit protein bL35 (65 aa).

The interval 1 to 23 (MPKMKTHRGAAKRFKKTGTGKLK) is disordered.

The protein belongs to the bacterial ribosomal protein bL35 family.

The protein is Large ribosomal subunit protein bL35 of Clostridium perfringens (strain ATCC 13124 / DSM 756 / JCM 1290 / NCIMB 6125 / NCTC 8237 / Type A).